Reading from the N-terminus, the 137-residue chain is Large ribosomal subunit protein uL16 (137 aa).

The tract at residues 1–22 (MLQPKRTKFRKQQKGRNRGLAH) is disordered.

It belongs to the universal ribosomal protein uL16 family. In terms of assembly, part of the 50S ribosomal subunit.

Binds 23S rRNA and is also seen to make contacts with the A and possibly P site tRNAs. This Saccharophagus degradans (strain 2-40 / ATCC 43961 / DSM 17024) protein is Large ribosomal subunit protein uL16.